Reading from the N-terminus, the 290-residue chain is Ribosomal RNA small subunit methyltransferase H (290 aa).

S-adenosyl-L-methionine contacts are provided by residues 35–37, aspartate 54, phenylalanine 81, aspartate 97, and glutamine 104; that span reads GGH.

This sequence belongs to the methyltransferase superfamily. RsmH family.

It is found in the cytoplasm. It catalyses the reaction cytidine(1402) in 16S rRNA + S-adenosyl-L-methionine = N(4)-methylcytidine(1402) in 16S rRNA + S-adenosyl-L-homocysteine + H(+). Specifically methylates the N4 position of cytidine in position 1402 (C1402) of 16S rRNA. This chain is Ribosomal RNA small subunit methyltransferase H, found in Picosynechococcus sp. (strain ATCC 27264 / PCC 7002 / PR-6) (Agmenellum quadruplicatum).